Here is a 448-residue protein sequence, read N- to C-terminus: DNA repair protein RadA (448 aa).

Residues Cys10–Cys27 form a C4-type zinc finger. Gly91–Ser98 contributes to the ATP binding site. Positions Lys250 to Gly254 match the RadA KNRFG motif motif. The interval Glu349 to Ser448 is lon-protease-like.

This sequence belongs to the RecA family. RadA subfamily.

Functionally, DNA-dependent ATPase involved in processing of recombination intermediates, plays a role in repairing DNA breaks. Stimulates the branch migration of RecA-mediated strand transfer reactions, allowing the 3' invading strand to extend heteroduplex DNA faster. Binds ssDNA in the presence of ADP but not other nucleotides, has ATPase activity that is stimulated by ssDNA and various branched DNA structures, but inhibited by SSB. Does not have RecA's homology-searching function. In Rickettsia bellii (strain RML369-C), this protein is DNA repair protein RadA.